The sequence spans 224 residues: UPF0758 protein Nmul_A2138 (224 aa).

An MPN domain is found at 102-224; the sequence is AMDSPGPVRA…TLSFAEQGLI (123 aa). Zn(2+) contacts are provided by His-173, His-175, and Asp-186. Positions 173 to 186 match the JAMM motif motif; it reads HNHPSGAAEPSHAD.

It belongs to the UPF0758 family.

In Nitrosospira multiformis (strain ATCC 25196 / NCIMB 11849 / C 71), this protein is UPF0758 protein Nmul_A2138.